Reading from the N-terminus, the 438-residue chain is DNA primase DnaG (438 aa).

Residues 171–245 (DAILVVEGRA…DIDYVARAPE (75 aa)) enclose the Toprim domain. 3 residues coordinate Mg(2+): E177, D219, and D221.

The protein belongs to the archaeal DnaG primase family. Forms a ternary complex with MCM helicase and DNA. Component of the archaeal exosome complex. Requires Mg(2+) as cofactor.

It catalyses the reaction ssDNA + n NTP = ssDNA/pppN(pN)n-1 hybrid + (n-1) diphosphate.. RNA polymerase that catalyzes the synthesis of short RNA molecules used as primers for DNA polymerase during DNA replication. Also part of the exosome, which is a complex involved in RNA degradation. Acts as a poly(A)-binding protein that enhances the interaction between heteromeric, adenine-rich transcripts and the exosome. The protein is DNA primase DnaG of Methanothrix thermoacetophila (strain DSM 6194 / JCM 14653 / NBRC 101360 / PT) (Methanosaeta thermophila).